The chain runs to 410 residues: Acyl-CoA-binding domain-containing protein 5-B (410 aa).

An ACB domain is found at 12–101 (AQKRFEAAVK…IQLIIETLPV (90 aa)). An acyl-CoA contacts are provided by residues 23–32 (IRSLPEDGSY), 43–47 (YSYYK), Lys69, and Tyr88. The segment covering 119 to 128 (VEDDDDDDDE) has biased composition (acidic residues). Disordered regions lie at residues 119-165 (VEDD…LDDY), 221-242 (SDDE…GSGV), and 254-320 (GANM…DRMD). A coiled-coil region spans residues 326–355 (TQITTILSELEDNMQDVLRRLTTLEQLTAS). A membrane pass occupies residues 382-404 (SPFTAVLTVLWPFAVHWLVQFYL).

Its subcellular location is the membrane. Its function is as follows. Binds medium- and long-chain acyl-CoA esters. The chain is Acyl-CoA-binding domain-containing protein 5-B (acbd5b) from Danio rerio (Zebrafish).